The chain runs to 181 residues: Caltractin ICL1a (181 aa).

The interval 1-29 is disordered; sequence MARRGQQPPPQQAPPAQKNQPGKFNPAEF. Low complexity predominate over residues 14–23; sequence PPAQKNQPGK. EF-hand domains are found at residues 37–72, 73–108, 110–145, and 146–181; these read EEVLEIKEAFDLFDTDGTQSIDPKELKAAMTSLGFE, AKNQTIYQMISDLDTDGSGQIDFAEFLKLMTARISE, DSKADIQKVFNLFDSERAGVVTLKDLRKVAKELGET, and MDDSELQEMIDRADSDGDAQVTFEDFYNIMTKKTFA. 10 residues coordinate Ca(2+): Asp50, Asp52, Thr54, Ser56, Glu61, Asp86, Asp88, Ser90, Gln92, and Glu97.

This sequence belongs to the centrin family. Monomer.

The protein localises to the cytoplasm. It is found in the cytoskeleton. Functionally, plays a fundamental role in microtubule organizing center structure and function. Component of the infraciliary lattice (ICL) and the ciliary basal bodies. The polypeptide is Caltractin ICL1a (Icl1a) (Paramecium tetraurelia).